A 1019-amino-acid chain; its full sequence is UPF0182 protein Krad_1193 (1019 aa).

7 consecutive transmembrane segments (helical) span residues 19–39 (GAAL…VVGA), 61–81 (LWLQ…AVAV), 115–135 (RLVV…VAMS), 169–189 (WLAF…IAGL), 213–233 (VHLA…YWLD), 264–284 (AILA…AVGT), and 291–311 (IGTG…PWAV). Disordered regions lie at residues 897–934 (GNSG…ATGD) and 977–1019 (DAAS…TPTP). The span at 977–1005 (DAASAAEARLERSGTSGPTSSSSPSASSA) shows a compositional bias: low complexity. Pro residues predominate over residues 1006 to 1019 (PPVPGETPAATPTP).

It belongs to the UPF0182 family.

The protein resides in the cell membrane. The polypeptide is UPF0182 protein Krad_1193 (Kineococcus radiotolerans (strain ATCC BAA-149 / DSM 14245 / SRS30216)).